The primary structure comprises 143 residues: Synuclein (143 aa).

3 repeat units span residues 20–30 (EKTKQGVQDAA), 31–41 (EKTKQGVQDAA), and 42–52 (EKTKEGVMYVG). Positions 20–78 (EKTKQGVQDAAEKTKQGVQDAAEKTKEGVMYVGTKTKEGVVQSVNTVTEKTKEQANVVG) are 5 X 11 AA tandem repeats of [EGST]-K-T-K-[EQ]-[GQ]-[VA]-X(4). One copy of the 4; approximate repeat lies at 53–67 (TKTKEGVVQSVNTVT). The stretch at 68–78 (EKTKEQANVVG) is repeat 5. The disordered stretch occupies residues 113–143 (REIPAEQVAEGKQTTQEPLVEATEATEETGK).

This sequence belongs to the synuclein family. Nervous system tissue. Found in the electric lobe, the brain and the spinal cord.

Its subcellular location is the nucleus. Functionally, may have a role in synaptic regulation or signal transduction. The protein is Synuclein of Tetronarce californica (Pacific electric ray).